A 278-amino-acid chain; its full sequence is MDIFPAPAKLNLFLHVIGRREDGYHLLQTVFRFIDHSDRLHFDITHDGVIRHENLIPGLTETDDLCVRAAKLLRQRFGRESLGVKIHLEKNIPLGGGLGGGSSDAATTLIALNRLWGINWKRERLMALGLELGADVPVFIYGRNAFAEGVGEELHAVDLPSAWYVVLTPPVQISTAAVFTSKELTRNTIPIKMAAFSMGQGHNDLEPVAMRMQPVIAGWLGWLKQQHGTTKVAMSGSGSCMFAEFPSESAAREVFGRLPGDMSGFVVSGLARHPLSDF.

K9 is a catalytic residue. An ATP-binding site is contributed by 93–103 (PLGGGLGGGSS). D135 is a catalytic residue.

It belongs to the GHMP kinase family. IspE subfamily.

It catalyses the reaction 4-CDP-2-C-methyl-D-erythritol + ATP = 4-CDP-2-C-methyl-D-erythritol 2-phosphate + ADP + H(+). It participates in isoprenoid biosynthesis; isopentenyl diphosphate biosynthesis via DXP pathway; isopentenyl diphosphate from 1-deoxy-D-xylulose 5-phosphate: step 3/6. Catalyzes the phosphorylation of the position 2 hydroxy group of 4-diphosphocytidyl-2C-methyl-D-erythritol. The chain is 4-diphosphocytidyl-2-C-methyl-D-erythritol kinase from Nitrosomonas europaea (strain ATCC 19718 / CIP 103999 / KCTC 2705 / NBRC 14298).